Here is a 413-residue protein sequence, read N- to C-terminus: Serine/threonine transporter SstT (413 aa).

A run of 9 helical transmembrane segments spans residues 21 to 41, 61 to 81, 89 to 109, 146 to 166, 189 to 209, 224 to 244, 305 to 325, 337 to 357, and 363 to 383; these read IGLL…SALG, SVAP…KKVG, IIYL…FASF, ITAL…GLGI, IVHF…ASTL, LAVL…IIVF, MGGA…TLGI, LVAS…LLLI, and LFGI…IIGV.

This sequence belongs to the dicarboxylate/amino acid:cation symporter (DAACS) (TC 2.A.23) family.

It localises to the cell inner membrane. The enzyme catalyses L-serine(in) + Na(+)(in) = L-serine(out) + Na(+)(out). It carries out the reaction L-threonine(in) + Na(+)(in) = L-threonine(out) + Na(+)(out). Its function is as follows. Involved in the import of serine and threonine into the cell, with the concomitant import of sodium (symport system). This chain is Serine/threonine transporter SstT, found in Mannheimia succiniciproducens (strain KCTC 0769BP / MBEL55E).